Consider the following 278-residue polypeptide: MQIVRNVPDLRAARAALTDGGRARLALVPTMGALHEGHLSLVRAAREAGHVVAASIFVNPTQFGPNEDFTRYPRDPERDCALLAEAGCALAWLPEVSTMYPPGDATSVEVAGLSVVLEGAVRPGHYRGVATVVVKLLGQVRPDAAYFGEKDWQQVQVIRRVAADLFLPVEIVVGPTLREKDGLAMSSRNRYLDPADRARAPLLHQVLRRVRAALRDGEPAAAALAAGRRALAEGGFIVDYLELVDAGTLAPLTAPDDGARLLAAARLGTTRLLDTVAV.

31–38 (MGALHEGH) provides a ligand contact to ATP. H38 functions as the Proton donor in the catalytic mechanism. Residue Q62 participates in (R)-pantoate binding. Q62 contacts beta-alanine. ATP is bound at residue 148–151 (GEKD). Q154 is a (R)-pantoate binding site. ATP contacts are provided by residues L177 and 185 to 188 (MSSR).

Belongs to the pantothenate synthetase family. Homodimer.

The protein localises to the cytoplasm. It carries out the reaction (R)-pantoate + beta-alanine + ATP = (R)-pantothenate + AMP + diphosphate + H(+). It functions in the pathway cofactor biosynthesis; (R)-pantothenate biosynthesis; (R)-pantothenate from (R)-pantoate and beta-alanine: step 1/1. Catalyzes the condensation of pantoate with beta-alanine in an ATP-dependent reaction via a pantoyl-adenylate intermediate. In Acidiphilium cryptum (strain JF-5), this protein is Pantothenate synthetase.